We begin with the raw amino-acid sequence, 551 residues long: Chaperonin GroEL (551 aa).

Residues 29-32, K50, 86-90, G414, 478-480, and D494 contribute to the ATP site; these read TMGP, DGTTT, and NAA.

Belongs to the chaperonin (HSP60) family. In terms of assembly, forms a cylinder of 14 subunits composed of two heptameric rings stacked back-to-back. Interacts with the co-chaperonin GroES.

The protein resides in the cytoplasm. It catalyses the reaction ATP + H2O + a folded polypeptide = ADP + phosphate + an unfolded polypeptide.. In terms of biological role, together with its co-chaperonin GroES, plays an essential role in assisting protein folding. The GroEL-GroES system forms a nano-cage that allows encapsulation of the non-native substrate proteins and provides a physical environment optimized to promote and accelerate protein folding. This chain is Chaperonin GroEL, found in Legionella jeonii.